A 120-amino-acid chain; its full sequence is Large ribosomal subunit protein bL17 (120 aa).

This sequence belongs to the bacterial ribosomal protein bL17 family. As to quaternary structure, part of the 50S ribosomal subunit. Contacts protein L32.

This Geobacillus kaustophilus (strain HTA426) protein is Large ribosomal subunit protein bL17.